The sequence spans 356 residues: Cell division protein ZipA (356 aa).

The Periplasmic portion of the chain corresponds to 1–6 (MEDLQL). The chain crosses the membrane as a helical span at residues 7 to 27 (VLFVLGAIAIVAVLVHGFWSI). Topologically, residues 28–356 (RRQQPKSLKD…DYLHRIRANA (329 aa)) are cytoplasmic. The segment at 132–155 (PAQPDFSLQPPVAKEQHRGPKVSR) is disordered.

The protein belongs to the ZipA family. As to quaternary structure, interacts with FtsZ via their C-terminal domains.

Its subcellular location is the cell inner membrane. Its function is as follows. Essential cell division protein that stabilizes the FtsZ protofilaments by cross-linking them and that serves as a cytoplasmic membrane anchor for the Z ring. Also required for the recruitment to the septal ring of downstream cell division proteins. This Shewanella baltica (strain OS185) protein is Cell division protein ZipA.